The chain runs to 240 residues: Seed lectin (240 aa).

Asn-111 is a glycosylation site (N-linked (GlcNAc...) asparagine). Mn(2+) contacts are provided by Glu-123 and Asp-125. The Ca(2+) site is built by Asp-125, Asn-129, and Asp-132. Mn(2+) is bound by residues Asp-132 and His-137. Residue Asn-183 is glycosylated (N-linked (GlcNAc...) asparagine).

This sequence belongs to the leguminous lectin family. As to quaternary structure, homotetramer. Partially N-glycosylated at Asn-111 and Asn-183 with the heptasaccharide [(beta-xylosyl-1,2)(alpha-mannosyl-1,6)(alpha-mannosyl-1,3)]beta-manosyl-1,4-GlcNAC-beta-1,4-GlcNAc-beta-1,4 [alpha-fucosyl-1,3]GlcNAc. A small proportion of alpha chains are proteolytically cleaved at 114-115 into gamma and beta chains. This is probably dependent on the deglycosylation of Asn-111. Seed.

In terms of biological role, lectin that binds galactose. The polypeptide is Seed lectin (Vatairea macrocarpa).